The primary structure comprises 292 residues: Acetylglutamate kinase (292 aa).

Residues 62–63, Arg-84, and Asn-188 each bind substrate; that span reads GG.

Belongs to the acetylglutamate kinase family. ArgB subfamily.

Its subcellular location is the cytoplasm. It catalyses the reaction N-acetyl-L-glutamate + ATP = N-acetyl-L-glutamyl 5-phosphate + ADP. Its pathway is amino-acid biosynthesis; L-arginine biosynthesis; N(2)-acetyl-L-ornithine from L-glutamate: step 2/4. In terms of biological role, catalyzes the ATP-dependent phosphorylation of N-acetyl-L-glutamate. The polypeptide is Acetylglutamate kinase (Methanosarcina mazei (strain ATCC BAA-159 / DSM 3647 / Goe1 / Go1 / JCM 11833 / OCM 88) (Methanosarcina frisia)).